Here is a 302-residue protein sequence, read N- to C-terminus: Segregation and condensation protein A (302 aa).

It belongs to the ScpA family. As to quaternary structure, component of a cohesin-like complex composed of ScpA, ScpB and the Smc homodimer, in which ScpA and ScpB bind to the head domain of Smc. The presence of the three proteins is required for the association of the complex with DNA.

The protein resides in the cytoplasm. Participates in chromosomal partition during cell division. May act via the formation of a condensin-like complex containing Smc and ScpB that pull DNA away from mid-cell into both cell halves. This is Segregation and condensation protein A from Xylella fastidiosa (strain 9a5c).